The following is a 519-amino-acid chain: 2,3-bisphosphoglycerate-independent phosphoglycerate mutase (519 aa).

Mn(2+)-binding residues include Asp-18 and Ser-68. The active-site Phosphoserine intermediate is Ser-68. Substrate is bound by residues His-129, 159–160 (RD), Arg-191, Arg-197, 267–270 (RADR), and Lys-341. Mn(2+)-binding residues include Asp-408, His-412, Asp-449, His-450, and His-468.

Belongs to the BPG-independent phosphoglycerate mutase family. In terms of assembly, monomer. The cofactor is Mn(2+).

It carries out the reaction (2R)-2-phosphoglycerate = (2R)-3-phosphoglycerate. Its pathway is carbohydrate degradation; glycolysis; pyruvate from D-glyceraldehyde 3-phosphate: step 3/5. Its function is as follows. Catalyzes the interconversion of 2-phosphoglycerate and 3-phosphoglycerate. This Coxiella burnetii (strain RSA 493 / Nine Mile phase I) protein is 2,3-bisphosphoglycerate-independent phosphoglycerate mutase.